A 259-amino-acid chain; its full sequence is Imidazole glycerol phosphate synthase subunit HisF (259 aa).

Active-site residues include D11 and D130.

This sequence belongs to the HisA/HisF family. In terms of assembly, heterodimer of HisH and HisF.

The protein resides in the cytoplasm. The enzyme catalyses 5-[(5-phospho-1-deoxy-D-ribulos-1-ylimino)methylamino]-1-(5-phospho-beta-D-ribosyl)imidazole-4-carboxamide + L-glutamine = D-erythro-1-(imidazol-4-yl)glycerol 3-phosphate + 5-amino-1-(5-phospho-beta-D-ribosyl)imidazole-4-carboxamide + L-glutamate + H(+). Its pathway is amino-acid biosynthesis; L-histidine biosynthesis; L-histidine from 5-phospho-alpha-D-ribose 1-diphosphate: step 5/9. Its function is as follows. IGPS catalyzes the conversion of PRFAR and glutamine to IGP, AICAR and glutamate. The HisF subunit catalyzes the cyclization activity that produces IGP and AICAR from PRFAR using the ammonia provided by the HisH subunit. This Acidovorax ebreus (strain TPSY) (Diaphorobacter sp. (strain TPSY)) protein is Imidazole glycerol phosphate synthase subunit HisF.